Reading from the N-terminus, the 197-residue chain is 22.7 kDa class IV heat shock protein (197 aa).

The N-terminal stretch at Met-1 to Ala-28 is a signal peptide. Residues Pro-68–Glu-184 enclose the sHSP domain. The Prevents secretion from ER motif lies at Asp-194–Lys-197.

It belongs to the small heat shock protein (HSP20) family. As to quaternary structure, forms oligomeric structures.

Its subcellular location is the endoplasmic reticulum lumen. The protein is 22.7 kDa class IV heat shock protein (HSP22.7) of Pisum sativum (Garden pea).